We begin with the raw amino-acid sequence, 338 residues long: Deoxyhypusine hydroxylase (338 aa).

HEAT-like PBS-type repeat units lie at residues 71–97 (LKHE…VLKD), 104–130 (CRHE…LKDD), 200–233 (QRYR…GLKD), 238–264 (FRHE…CLSN), and 271–298 (VRHE…FLND). Fe cation contacts are provided by histidine 73, glutamate 74, histidine 106, and glutamate 107. Positions 240, 241, 273, and 274 each coordinate Fe cation.

This sequence belongs to the deoxyhypusine hydroxylase family. Fe(2+) serves as cofactor.

It is found in the cytoplasm. The protein localises to the nucleus. The catalysed reaction is [eIF5A protein]-deoxyhypusine + AH2 + O2 = [eIF5A protein]-hypusine + A + H2O. It participates in protein modification; eIF5A hypusination. Catalyzes the hydroxylation of the N(6)-(4-aminobutyl)-L-lysine intermediate to form hypusine, an essential post-translational modification only found in mature eIF-5A factor. This is Deoxyhypusine hydroxylase (lia1) from Aspergillus niger (strain ATCC MYA-4892 / CBS 513.88 / FGSC A1513).